Here is a 104-residue protein sequence, read N- to C-terminus: MSSSRRSRSRRAGSSVPSSSSSSRTSISEDQIAELLSKLQALLPESQARNGAHRGSAARVLQETCSYIRSLHQEVDNLSETLAQLLASPDVTSDQAAVIRSLLM.

Basic residues predominate over residues 1–11 (MSSSRRSRSRR). Positions 1-27 (MSSSRRSRSRRAGSSVPSSSSSSRTSI) are disordered. The span at 12-27 (AGSSVPSSSSSSRTSI) shows a compositional bias: low complexity. The bHLH domain occupies 16–71 (VPSSSSSSRTSISEDQIAELLSKLQALLPESQARNGAHRGSAARVLQETCSYIRSL).

This sequence belongs to the bHLH protein family. In terms of assembly, interacts with IBH1.

Atypical and probable non DNA-binding bHLH transcription factor that acts as a positive regulator of cell elongation and plant development. Binds the transcription repressor IBH1 and forms a heterodimer of antagonistic bHLH transcription factors that function downstream of BZR1 to mediate brassinosteroid regulation of cell elongation and lamina inclination. The sequence is that of Transcription factor ILI1 (ILI1) from Oryza sativa subsp. indica (Rice).